The following is a 62-amino-acid chain: Photosystem II reaction center X protein (62 aa).

Residues 26 to 46 (IASFFAAALLIVIPAAAFLIF) form a helical membrane-spanning segment.

Belongs to the PsbX family. Type 2 subfamily. PSII consists of a core antenna complex that captures photons, and an electron transfer chain that converts photonic excitation into a charge separation. PSII forms dimeric complexes.

The protein localises to the cellular thylakoid membrane. Its function is as follows. Involved in the binding and/or turnover of quinones at the Q(B) site of Photosystem II. In Prochlorococcus marinus subsp. pastoris (strain CCMP1986 / NIES-2087 / MED4), this protein is Photosystem II reaction center X protein.